A 21-amino-acid chain; its full sequence is Cupiennin-6e (21 aa).

Serine amide is present on serine 21.

In terms of tissue distribution, expressed by the venom gland.

Its subcellular location is the secreted. The polypeptide is Cupiennin-6e (Cupiennius salei (American wandering spider)).